The primary structure comprises 561 residues: Zinc finger protein 394 (561 aa).

Positions 1–61 (MNSSLTAQRR…NYPAASPDPE (61 aa)) are disordered. Ser-12 carries the post-translational modification Phosphoserine. A Glycyl lysine isopeptide (Lys-Gly) (interchain with G-Cter in SUMO2) cross-link involves residue Lys-40. Positions 64-146 (RLHFRQLRYQ…AVVRALQRAL (83 aa)) constitute an SCAN box domain. The 76-residue stretch at 155–230 (VTFEDTAVSL…LQEAFQGKRP (76 aa)) folds into the KRAB domain. The interval 182–201 (ESAQKDSGSTVPPSLESRVE) is disordered. Residues Lys-203 and Lys-228 each participate in a glycyl lysine isopeptide (Lys-Gly) (interchain with G-Cter in SUMO2) cross-link. The segment at 231-285 (LFSKCGSTHEDRVEKQSGDPLPLKLENSPEAEGLNSISDVNKNGSIEGEDSKNNE) is disordered. Residues 237 to 247 (STHEDRVEKQS) are compositionally biased toward basic and acidic residues. Lys-254 is covalently cross-linked (Glycyl lysine isopeptide (Lys-Gly) (interchain with G-Cter in SUMO2)). A compositionally biased stretch (polar residues) spans 265–274 (NSISDVNKNG). Lys-282 participates in a covalent cross-link: Glycyl lysine isopeptide (Lys-Gly) (interchain with G-Cter in SUMO2). 7 C2H2-type zinc fingers span residues 358–380 (YKCG…QRIH), 386–408 (YGCQ…QRTH), 414–436 (YTCL…QSTH), 442–463 (FKCE…QRLH), 469–491 (YKCE…HRIH), 497–519 (YGCS…QRIH), and 525–547 (YKCL…QRIH). Lys-443 is covalently cross-linked (Glycyl lysine isopeptide (Lys-Gly) (interchain with G-Cter in SUMO2)).

The protein belongs to the krueppel C2H2-type zinc-finger protein family.

It is found in the nucleus. May be involved in transcriptional regulation. This chain is Zinc finger protein 394 (ZNF394), found in Homo sapiens (Human).